Consider the following 619-residue polypeptide: ETS-related transcription factor Elf-1 (619 aa).

S110, S163, S167, and S168 each carry phosphoserine. The interval 158–199 (EKYADSPGASSPEQPKRKKGRKTKPPRPDSPATTPNISVKKK) is disordered. The span at 173–182 (KRKKGRKTKP) shows a compositional bias: basic residues. Residue S187 is modified to Phosphoserine. T190 is subject to Phosphothreonine. Residues 208-290 (IYLWEFLLAL…EGQRLVYQFK (83 aa)) constitute a DNA-binding region (ETS). Residues 300–366 (NDEDPSSSIE…DPVEVAQPSE (67 aa)) are disordered. Positions 305–321 (SSSIESSDPSLSSSATS) are enriched in low complexity. Residues 322–335 (NRNQTSRSRVSSSP) show a composition bias toward polar residues. Position 432 is a phosphoserine (S432). A disordered region spans residues 564 to 592 (TLTQEVEKKESEDHLKENTEKTEQQPQPY). Residues 568–586 (EVEKKESEDHLKENTEKTE) show a composition bias toward basic and acidic residues.

Belongs to the ETS family. Binds to the underphosphorylated form of RB. May interact with other transcription factors in order to regulate specific genes. Interacts with RUNX1. As to expression, in fetal tissues, it is highly expressed in heart, lung liver and kidney, and weakly expressed in brain. In adult, it is highly expressed in pancreas, spleen, thymus and peripheral blood leukocytes, expressed at moderate levels in heart, placenta, lung, liver, skeletal muscle, kidney, prostate, ovary, small intestine and colon, and weakly expressed in brain and testis.

It localises to the nucleus. Transcription factor that activates the LYN and BLK promoters. Appears to be required for the T-cell-receptor-mediated trans activation of HIV-2 gene expression. Binds specifically to two purine-rich motifs in the HIV-2 enhancer. The chain is ETS-related transcription factor Elf-1 (ELF1) from Homo sapiens (Human).